Reading from the N-terminus, the 425-residue chain is Oxytetracycline polyketide putative beta-ketoacyl synthase 1 (425 aa).

In terms of domain architecture, Ketosynthase family 3 (KS3) spans 7–420 (ARRVVITGIG…GFQSAIVLTE (414 aa)). Residues C173, H313, and H350 each act as for beta-ketoacyl synthase activity in the active site.

It belongs to the thiolase-like superfamily. Beta-ketoacyl-ACP synthases family.

It participates in antibiotic biosynthesis; oxytetracycline biosynthesis. The sequence is that of Oxytetracycline polyketide putative beta-ketoacyl synthase 1 from Streptomyces rimosus.